A 268-amino-acid polypeptide reads, in one-letter code: tRNA pseudouridine synthase A (268 aa).

The active-site Nucleophile is the Asp-52. Tyr-110 contacts substrate.

This sequence belongs to the tRNA pseudouridine synthase TruA family. In terms of assembly, homodimer.

It carries out the reaction uridine(38/39/40) in tRNA = pseudouridine(38/39/40) in tRNA. Its function is as follows. Formation of pseudouridine at positions 38, 39 and 40 in the anticodon stem and loop of transfer RNAs. The chain is tRNA pseudouridine synthase A from Prochlorococcus marinus (strain MIT 9301).